The following is a 331-amino-acid chain: B-box zinc finger protein 21 (331 aa).

8 residues coordinate Zn(2+): Cys5, Cys8, Cys28, His34, Cys60, Cys63, Cys83, and His93. The B box-type 1; atypical zinc finger occupies 5-47 (CDVCDKEEASVFCTADEASLCGGCDHQVHHANKLASKHLRFSL). A B box-type 2; atypical zinc finger spans residues 60 to 102 (CDICQDKKALLFCQQDRAILCKDCDSSIHAANEHTKKHDRFLL). Composition is skewed to low complexity over residues 115 to 126 (KPTSKSSSSSSS) and 228 to 238 (NNNNNNNNNNN). Disordered stretches follow at residues 115 to 167 (KPTS…GGDA) and 209 to 241 (DDDG…NTVS).

In terms of assembly, interacts with COP1, HY5 and BBX32. Interacts with FLZ1.

It is found in the nucleus. In terms of biological role, transcription activator that acts as a positive regulator of seedling photomorphogenesis. Acts downstream of COP1 and play an important role in early and long-term adjustment of the shade avoidance syndrome (SAS) responses in natural environments. In Arabidopsis thaliana (Mouse-ear cress), this protein is B-box zinc finger protein 21.